The primary structure comprises 211 residues: MTTLTRQDLNFGQVVADVLSEFLEVAVHLILYVREVYPIGIFQKRKKYNVPVQMSCHPELNQYIQDTLHCVKPLLEKNDVEKVVVVILDKEHHPVERFVFEITQPPLLSISSESLLSHVEQLLRAFILKISVCDAVLDNNPPGCTFTVLVHTREAATRNMEKIQVIKDFPWILADEQDVHMHDPRLIPLKTMTSDILKMQLYVEERAHKGT.

In terms of domain architecture, HORMA spans 13 to 203 (QVVADVLSEF…SDILKMQLYV (191 aa)).

In terms of assembly, homooligomer. Interacts with REV1. Interacts with FZR1 (in complex with the anaphase promoting complex APC). May interact with CDC20. Heterodimer with REV3L. This dimer forms the minimal DNA polymerase zeta complex (Pol-zeta2), with REV3L bearing DNA polymerase catalytic activity, although its activity is very low in this context. Component of the tetrameric Pol-zeta complex (Pol-zeta4), which consists of REV3L, MAD2L2, POLD2 and POLD3; Pol-zeta4 is the fully active form of DNA polymerase zeta. Component of the shieldin complex, consisting of SHLD1, SHLD2, SHLD3 and MAD2L2/REV7. Within the complex, SHLD2 forms a scaffold which interacts with a SHLD3-MAD2L2 subcomplex via its N-terminus, and with SHLD1 via its C-terminus.

It is found in the nucleus. Its subcellular location is the cytoplasm. It localises to the cytoskeleton. The protein resides in the spindle. The protein localises to the chromosome. Its function is as follows. Adapter protein able to interact with different proteins and involved in different biological processes. Mediates the interaction between the error-prone DNA polymerase zeta catalytic subunit REV3L and the inserter polymerase REV1, thereby mediating the second polymerase switching in translesion DNA synthesis. Translesion DNA synthesis releases the replication blockade of replicative polymerases, stalled in presence of DNA lesions. May also play a role in signal transduction in response to DNA damage. May regulate the activation of the anaphase promoting complex APC thereby regulating progression through the cell cycle. Component of the shieldin complex, which plays an important role in repair of DNA double-stranded breaks (DSBs). During G1 and S phase of the cell cycle, the complex functions downstream of TP53BP1 to promote non-homologous end joining (NHEJ) and suppress DNA end resection. Through transcriptional regulation may play a role in epithelial-mesenchymal transdifferentiation. This is Mitotic spindle assembly checkpoint protein MAD2B (MAD2L2) from Gallus gallus (Chicken).